Reading from the N-terminus, the 549-residue chain is Frizzled-7-A (549 aa).

Positions 1–22 are cleaved as a signal peptide; the sequence is MSSTVSLLFCCLFLQLCPSAQQ. Topologically, residues 23 to 231 are extracellular; sequence YHGEKGISVP…EEEVRFARLW (209 aa). An FZ domain is found at 32–151; the sequence is PDHGFCQPIS…HGAGEICVGQ (120 aa). 5 cysteine pairs are disulfide-bonded: Cys37-Cys98, Cys45-Cys91, Cys82-Cys119, Cys108-Cys148, and Cys112-Cys136. Asn51 carries N-linked (GlcNAc...) asparagine glycosylation. Residue Asn152 is glycosylated (N-linked (GlcNAc...) asparagine). A helical transmembrane segment spans residues 232–252; it reads VGIWAILCCISTLFTVLTYLV. Residues 253-263 are Cytoplasmic-facing; sequence DMRRFSYPERP. Residues 264–284 traverse the membrane as a helical segment; that stretch reads IIFLSGCYFMVAVAYTAGFLL. The Extracellular portion of the chain corresponds to 285–311; the sequence is EERAVCVERFSEDSYRTVAQGTKKEGC. Residues 312–332 form a helical membrane-spanning segment; the sequence is TILFMILYFFGMASSIWWVIL. Over 333–354 the chain is Cytoplasmic; the sequence is SLTWFLSAGMKWGHEAIEANSQ. The chain crosses the membrane as a helical span at residues 355–375; that stretch reads YFHLAAWAVPAVKTITILAMG. At 376–398 the chain is on the extracellular side; it reads QVDGDVLSGVCYVGINSVDSLRG. A helical membrane pass occupies residues 399 to 419; sequence FVLAPLFVYLFIGTSFLLAGF. Topologically, residues 420-445 are cytoplasmic; the sequence is VSLFRIRTIMKHDGTKTEKLEKLMVR. The chain crosses the membrane as a helical span at residues 446–466; it reads IGVFSVMYTVPATIVLACYFY. At 467 to 503 the chain is on the extracellular side; it reads EQAFRDTWEKTWLVQTCKGYAVPCPNYNFAPMSPDFT. Residues 504 to 524 form a helical membrane-spanning segment; sequence VFMIKYLMTMIVGITSSFWIW. Residues 525–549 lie on the Cytoplasmic side of the membrane; it reads SGKTLQSWRRFYHRLSNGSKGETAV. The Lys-Thr-X-X-X-Trp motif, mediates interaction with the PDZ domain of Dvl family members motif lies at 527 to 532; the sequence is KTLQSW. The short motif at 547–549 is the PDZ-binding element; sequence TAV.

The protein belongs to the G-protein coupled receptor Fz/Smo family. Interacts with wnt11 and sdc4. The extracellular domain interacts with the extracellular domain of pcdh8/papc. As to expression, expressed in the animal region of cleavage stage embryos. During gastrulation, broadly expressed on the dorsal side of the embryo in deep mesodermal cells surrounding the blastopore lip and in presumptive anterior neuroectoderm. During neurulation, becomes progressively more restricted to the dorsal epidermis, neural plate, and neural tube. Expressed in the cranial neural crest of neurulae and tailbud embryos as well as the pronephros of tailbud embryos. Localized to the brain of neurulae, tailbud embryos and tadpoles. In tadpoles, strongly expressed in the eye and developing heart.

Its subcellular location is the cell membrane. The protein resides in the endosome membrane. In terms of biological role, receptor for Wnt proteins. Acts in both canonical and non-canonical Wnt pathways. Although different papers report differing Wnt preferences, wnt5a, wnt8b and wnt11 have been proposed as synergists. In the canonical Wnt pathway, acts via beta-catenin to promote the expression of the dorsal genes siamois, twin and nodal3 and to establish the dorsal axis of the embryo and induce dorsal mesoderm formation. In a non-canonical Wnt/planar cell polarity (PCP) pathway, acts with sdc4 and dvl2/dsh to regulate convergent extension cell movements during gastrulation. Triggers phosphorylation of dvl2/dsh and its translocation to the plasma membrane. In a third branch of Wnt signaling, acts in a non-canonical pathway via trimeric G proteins, and independently of dvl2/dsh, to recruit protein kinase C (PKC) to the membrane and thus activate PKC. PKC signaling controls cell sorting and tissue separation during gastrulation. In Xenopus laevis (African clawed frog), this protein is Frizzled-7-A (fzd7-a).